Reading from the N-terminus, the 106-residue chain is uncharacterized protein (106 aa).

Transmembrane regions (helical) follow at residues 3–23, 29–49, 50–70, and 82–102; these read WFLL…MKYI, KWPI…LSQA, MIVL…SIGV, and FQLS…GLRL.

This sequence belongs to the drug/metabolite transporter (DMT) superfamily. Small multidrug resistance (SMR) (TC 2.A.7.1) family.

It localises to the cell membrane. This is an uncharacterized protein from Bacillus subtilis (strain 168).